The chain runs to 120 residues: Inner membrane protein YidG (120 aa).

Residues Met-1–Ser-21 lie on the Cytoplasmic side of the membrane. A helical transmembrane segment spans residues Leu-22–Ile-39. The Periplasmic segment spans residues Lys-40–Met-48. A helical transmembrane segment spans residues Leu-49–Thr-68. Residues Arg-69–Lys-90 are Cytoplasmic-facing. A helical membrane pass occupies residues Phe-91 to Ile-113. The Periplasmic portion of the chain corresponds to Val-114–Ala-120.

It is found in the cell inner membrane. This is Inner membrane protein YidG (yidG) from Escherichia coli O157:H7.